The following is a 185-amino-acid chain: Ribosome-recycling factor (185 aa).

It belongs to the RRF family.

The protein localises to the cytoplasm. Functionally, responsible for the release of ribosomes from messenger RNA at the termination of protein biosynthesis. May increase the efficiency of translation by recycling ribosomes from one round of translation to another. This is Ribosome-recycling factor from Streptococcus agalactiae serotype V (strain ATCC BAA-611 / 2603 V/R).